The chain runs to 618 residues: Dihydroxy-acid dehydratase (618 aa).

Mg(2+) is bound at residue aspartate 81. Cysteine 122 lines the [2Fe-2S] cluster pocket. Residues aspartate 123 and lysine 124 each coordinate Mg(2+). Lysine 124 bears the N6-carboxylysine mark. Cysteine 195 serves as a coordination point for [2Fe-2S] cluster. Position 493 (glutamate 493) interacts with Mg(2+). The active-site Proton acceptor is the serine 519.

This sequence belongs to the IlvD/Edd family. In terms of assembly, homodimer. The cofactor is [2Fe-2S] cluster. Mg(2+) is required as a cofactor.

It carries out the reaction (2R)-2,3-dihydroxy-3-methylbutanoate = 3-methyl-2-oxobutanoate + H2O. The catalysed reaction is (2R,3R)-2,3-dihydroxy-3-methylpentanoate = (S)-3-methyl-2-oxopentanoate + H2O. Its pathway is amino-acid biosynthesis; L-isoleucine biosynthesis; L-isoleucine from 2-oxobutanoate: step 3/4. It functions in the pathway amino-acid biosynthesis; L-valine biosynthesis; L-valine from pyruvate: step 3/4. Its function is as follows. Functions in the biosynthesis of branched-chain amino acids. Catalyzes the dehydration of (2R,3R)-2,3-dihydroxy-3-methylpentanoate (2,3-dihydroxy-3-methylvalerate) into 2-oxo-3-methylpentanoate (2-oxo-3-methylvalerate) and of (2R)-2,3-dihydroxy-3-methylbutanoate (2,3-dihydroxyisovalerate) into 2-oxo-3-methylbutanoate (2-oxoisovalerate), the penultimate precursor to L-isoleucine and L-valine, respectively. The protein is Dihydroxy-acid dehydratase of Shewanella amazonensis (strain ATCC BAA-1098 / SB2B).